The following is a 282-amino-acid chain: Phosphoglycerate mutase-like protein 1 (282 aa).

The active-site Tele-phosphohistidine intermediate is His-23. Glu-135 acts as the Proton donor/acceptor in catalysis.

The protein belongs to the phosphoglycerate mutase family.

Functionally, may play a role in carbohydrates metabolism. This is Phosphoglycerate mutase-like protein 1 from Arabidopsis thaliana (Mouse-ear cress).